The sequence spans 638 residues: Threonine--tRNA ligase (638 aa).

One can recognise a TGS domain in the interval 1 to 61; the sequence is MPIITLPDGS…NKDSKVVIIT (61 aa). The interval 242 to 533 is catalytic; sequence DHRKLGKKHS…LIEQYEAKFP (292 aa). Cys-333, His-384, and His-510 together coordinate Zn(2+).

Belongs to the class-II aminoacyl-tRNA synthetase family. In terms of assembly, homodimer. Zn(2+) is required as a cofactor.

It localises to the cytoplasm. It carries out the reaction tRNA(Thr) + L-threonine + ATP = L-threonyl-tRNA(Thr) + AMP + diphosphate + H(+). Its function is as follows. Catalyzes the attachment of threonine to tRNA(Thr) in a two-step reaction: L-threonine is first activated by ATP to form Thr-AMP and then transferred to the acceptor end of tRNA(Thr). Also edits incorrectly charged L-seryl-tRNA(Thr). The sequence is that of Threonine--tRNA ligase from Prochlorococcus marinus (strain AS9601).